A 364-amino-acid chain; its full sequence is Protein-glutamate methylesterase/protein-glutamine glutaminase (364 aa).

One can recognise a Response regulatory domain in the interval 7–124 (RALIVDDSAL…SQNMPDMAEE (118 aa)). Aspartate 58 is subject to 4-aspartylphosphate. In terms of domain architecture, CheB-type methylesterase spans 167–364 (ETTSFVRNVL…MAEEIVKIIS (198 aa)). Active-site residues include serine 181, histidine 208, and aspartate 308.

This sequence belongs to the CheB family. Phosphorylated by CheA. Phosphorylation of the N-terminal regulatory domain activates the methylesterase activity.

The protein localises to the cytoplasm. The enzyme catalyses [protein]-L-glutamate 5-O-methyl ester + H2O = L-glutamyl-[protein] + methanol + H(+). It carries out the reaction L-glutaminyl-[protein] + H2O = L-glutamyl-[protein] + NH4(+). Involved in chemotaxis. Part of a chemotaxis signal transduction system that modulates chemotaxis in response to various stimuli. Catalyzes the demethylation of specific methylglutamate residues introduced into the chemoreceptors (methyl-accepting chemotaxis proteins or MCP) by CheR. Also mediates the irreversible deamidation of specific glutamine residues to glutamic acid. In Methanosarcina barkeri (strain Fusaro / DSM 804), this protein is Protein-glutamate methylesterase/protein-glutamine glutaminase.